Here is a 313-residue protein sequence, read N- to C-terminus: Protein-methionine-sulfoxide reductase catalytic subunit MsrP (313 aa).

Positions 1–45 (MPAYRPPHIASSEITPKSFYLSRRNFLGTAAGLAAIGLAGREAIA) form a signal peptide, tat-type signal. Residues asparagine 71, 74–75 (YE), cysteine 128, threonine 163, asparagine 213, arginine 218, and 229–231 (GIK) each bind Mo-molybdopterin.

Belongs to the MsrP family. In terms of assembly, heterodimer of a catalytic subunit (MsrP) and a heme-binding subunit (MsrQ). Requires Mo-molybdopterin as cofactor. In terms of processing, predicted to be exported by the Tat system. The position of the signal peptide cleavage has not been experimentally proven.

It is found in the periplasm. It carries out the reaction L-methionyl-[protein] + a quinone + H2O = L-methionyl-(S)-S-oxide-[protein] + a quinol. It catalyses the reaction L-methionyl-[protein] + a quinone + H2O = L-methionyl-(R)-S-oxide-[protein] + a quinol. Its function is as follows. Part of the MsrPQ system that repairs oxidized periplasmic proteins containing methionine sulfoxide residues (Met-O), using respiratory chain electrons. Thus protects these proteins from oxidative-stress damage caused by reactive species of oxygen and chlorine generated by the host defense mechanisms. MsrPQ is essential for the maintenance of envelope integrity under bleach stress, rescuing a wide series of structurally unrelated periplasmic proteins from methionine oxidation. The catalytic subunit MsrP is non-stereospecific, being able to reduce both (R-) and (S-) diastereoisomers of methionine sulfoxide. This Agrobacterium fabrum (strain C58 / ATCC 33970) (Agrobacterium tumefaciens (strain C58)) protein is Protein-methionine-sulfoxide reductase catalytic subunit MsrP.